Here is a 73-residue protein sequence, read N- to C-terminus: Putative antitoxin VapB9 (73 aa).

Its function is as follows. Antitoxin component of a possible type II toxin-antitoxin (TA) system. The cognate toxin is VapC9. The sequence is that of Putative antitoxin VapB9 (vapB9) from Mycobacterium tuberculosis (strain CDC 1551 / Oshkosh).